Reading from the N-terminus, the 276-residue chain is Protein-glutamine gamma-glutamyltransferase (276 aa).

Belongs to the bacillus TGase family.

It carries out the reaction L-glutaminyl-[protein] + L-lysyl-[protein] = [protein]-L-lysyl-N(6)-5-L-glutamyl-[protein] + NH4(+). Its function is as follows. Probably plays a role in the assembly of the spore coat proteins by catalyzing epsilon-(gamma-glutamyl)lysine cross-links. This is Protein-glutamine gamma-glutamyltransferase from Bacillus cereus (strain AH187).